The chain runs to 66 residues: Protein I177L (66 aa).

This sequence belongs to the asfivirus I177L family.

The protein resides in the virion. The chain is Protein I177L from African swine fever virus (isolate Tick/Malawi/Lil 20-1/1983) (ASFV).